The following is a 147-amino-acid chain: Male-specific protein scotti (147 aa).

The segment at E57 to R76 is disordered. A glycan (N-linked (GlcNAc...) asparagine) is linked at N128.

Belongs to the male-specific scotti family.

Post-meiotically transcribed gene that has a role in late spermiogenesis; required for actin cone progression during spermatid individualization. This chain is Male-specific protein scotti, found in Drosophila simulans (Fruit fly).